The sequence spans 224 residues: dTTP/UTP pyrophosphatase (224 aa).

D77 serves as the catalytic Proton acceptor.

The protein belongs to the Maf family. YhdE subfamily. Requires a divalent metal cation as cofactor.

It localises to the cytoplasm. It catalyses the reaction dTTP + H2O = dTMP + diphosphate + H(+). The catalysed reaction is UTP + H2O = UMP + diphosphate + H(+). Nucleoside triphosphate pyrophosphatase that hydrolyzes dTTP and UTP. May have a dual role in cell division arrest and in preventing the incorporation of modified nucleotides into cellular nucleic acids. This is dTTP/UTP pyrophosphatase from Dehalococcoides mccartyi (strain CBDB1).